Consider the following 500-residue polypeptide: NAD(P)H-quinone oxidoreductase chain 4, chloroplastic (500 aa).

Helical transmembrane passes span 4–24 (FPWLTIIVVFPISAGSLMLFL), 35–55 (YTICICILELLLTTYAFCYNF), 87–107 (IGTILLTGFITTLATLAAFPV), 113–130 (LFHFLMLAMYSGQIGSFS), 134–154 (LLLFFIMWELELIPVYLLLSM), 167–187 (FILYTAGSSIFLLIGVLGISL), 211–231 (ILFYIAFLIAFAVKSPIIPLH), 242–262 (HYSTCMLLAGILLKMGAYGLV), 272–292 (AHSMFSPWLMVVGTIQIIYAA), 305–325 (IAYSSVSHMGFIIIGISSITD), 330–350 (GAILQIISHGFIGAALFFLAG), 386–406 (LALPGMSGFVAELIVFFGIIT), 416–436 (ILIIFVMAIGMILTPIYLLSM), and 462–482 (LFLSISILLPIIGIGIYPDFV).

This sequence belongs to the complex I subunit 4 family.

It is found in the plastid. The protein localises to the chloroplast thylakoid membrane. It carries out the reaction a plastoquinone + NADH + (n+1) H(+)(in) = a plastoquinol + NAD(+) + n H(+)(out). It catalyses the reaction a plastoquinone + NADPH + (n+1) H(+)(in) = a plastoquinol + NADP(+) + n H(+)(out). In Olimarabidopsis pumila (Dwarf rocket), this protein is NAD(P)H-quinone oxidoreductase chain 4, chloroplastic.